A 394-amino-acid chain; its full sequence is Tryptophan synthase beta chain (394 aa).

N6-(pyridoxal phosphate)lysine is present on lysine 90.

The protein belongs to the TrpB family. As to quaternary structure, tetramer of two alpha and two beta chains. It depends on pyridoxal 5'-phosphate as a cofactor.

It carries out the reaction (1S,2R)-1-C-(indol-3-yl)glycerol 3-phosphate + L-serine = D-glyceraldehyde 3-phosphate + L-tryptophan + H2O. Its pathway is amino-acid biosynthesis; L-tryptophan biosynthesis; L-tryptophan from chorismate: step 5/5. In terms of biological role, the beta subunit is responsible for the synthesis of L-tryptophan from indole and L-serine. This chain is Tryptophan synthase beta chain, found in Bacteroides thetaiotaomicron (strain ATCC 29148 / DSM 2079 / JCM 5827 / CCUG 10774 / NCTC 10582 / VPI-5482 / E50).